A 265-amino-acid chain; its full sequence is 4-hydroxy-tetrahydrodipicolinate reductase (265 aa).

16 to 21 contributes to the NAD(+) binding site; sequence GANGKM. R43 is an NADP(+) binding site. NAD(+) is bound by residues 106–108 and 130–133; these read GTT and SENF. The active-site Proton donor/acceptor is the H164. H165 provides a ligand contact to (S)-2,3,4,5-tetrahydrodipicolinate. Residue K168 is the Proton donor of the active site. Residue 174-175 coordinates (S)-2,3,4,5-tetrahydrodipicolinate; the sequence is AT.

It belongs to the DapB family. As to quaternary structure, homotetramer.

It localises to the cytoplasm. The enzyme catalyses (S)-2,3,4,5-tetrahydrodipicolinate + NAD(+) + H2O = (2S,4S)-4-hydroxy-2,3,4,5-tetrahydrodipicolinate + NADH + H(+). It carries out the reaction (S)-2,3,4,5-tetrahydrodipicolinate + NADP(+) + H2O = (2S,4S)-4-hydroxy-2,3,4,5-tetrahydrodipicolinate + NADPH + H(+). Its pathway is amino-acid biosynthesis; L-lysine biosynthesis via DAP pathway; (S)-tetrahydrodipicolinate from L-aspartate: step 4/4. Functionally, catalyzes the conversion of 4-hydroxy-tetrahydrodipicolinate (HTPA) to tetrahydrodipicolinate. The polypeptide is 4-hydroxy-tetrahydrodipicolinate reductase (Wigglesworthia glossinidia brevipalpis).